The sequence spans 207 residues: Large ribosomal subunit protein uL4 (207 aa).

Positions 44–76 are disordered; that stretch reads KRRGTASAKTRSEVRGGGRKPWRQKGTGRARHG. Over residues 60-76 the composition is skewed to basic residues; the sequence is GGRKPWRQKGTGRARHG.

Belongs to the universal ribosomal protein uL4 family. Part of the 50S ribosomal subunit.

Functionally, one of the primary rRNA binding proteins, this protein initially binds near the 5'-end of the 23S rRNA. It is important during the early stages of 50S assembly. It makes multiple contacts with different domains of the 23S rRNA in the assembled 50S subunit and ribosome. Forms part of the polypeptide exit tunnel. This is Large ribosomal subunit protein uL4 from Natranaerobius thermophilus (strain ATCC BAA-1301 / DSM 18059 / JW/NM-WN-LF).